A 470-amino-acid polypeptide reads, in one-letter code: Nuclear receptor ROR-beta (470 aa).

The nuclear receptor DNA-binding region spans 18-93 (VIPCKICGDK…LGMSRDAVKF (76 aa)). 2 NR C4-type zinc fingers span residues 21–41 (CKIC…CEGC) and 57–81 (CPRQ…LQKC). A compositionally biased stretch (basic and acidic residues) spans 104–117 (LYAEVQKHQQRLQE). The disordered stretch occupies residues 104–127 (LYAEVQKHQQRLQEQRQQQSGEAE). Positions 222–460 (EIDRIAQNII…TLFPPLYKEL (239 aa)) constitute an NR LBD domain. The AF-2 motif lies at 456–461 (LYKELF).

This sequence belongs to the nuclear hormone receptor family. NR1 subfamily. Monomer. Interacts with CRX.

It is found in the nucleus. It localises to the nucleoplasm. Nuclear receptor that binds DNA as a monomer to ROR response elements (RORE) containing a single core motif half-site 5'-AGGTCA-3' preceded by a short A-T-rich sequence. Considered to have intrinsic transcriptional activity, have some natural ligands such as all-trans retinoic acid (ATRA) and other retinoids which act as inverse agonists repressing the transcriptional activity. Required for normal postnatal development of rod and cone photoreceptor cells. Modulates rod photoreceptors differentiation at least by inducing the transcription factor NRL-mediated pathway. In cone photoreceptor cells, regulates transcription of OPN1SW. Involved in the regulation of the period length and stability of the circadian rhythm. May control cytoarchitectural patterning of neocortical neurons during development. May act in a dose-dependent manner to regulate barrel formation upon innervation of layer IV neurons by thalamocortical axons. May play a role in the suppression of osteoblastic differentiation through the inhibition of RUNX2 transcriptional activity. In terms of biological role, isoform 1 is critical for hindlimb motor control and for the differentiation of amacrine and horizontal cells in the retina. Regulates the expression of PTF1A synergistically with FOXN4. In Homo sapiens (Human), this protein is Nuclear receptor ROR-beta (RORB).